A 256-amino-acid polypeptide reads, in one-letter code: Cytoplasmic envelopment protein 1 (256 aa).

The protein belongs to the herpesviridae cytoplasmic envelopment protein 1 family.

It is found in the virion. The protein resides in the virion tegument. It localises to the host cytoplasm. The protein localises to the host Golgi apparatus. Functionally, plays a critical role in cytoplasmic virus egress. Participates in the final step of tegumentation and envelope acquisition within the host cytoplasm. This is Cytoplasmic envelopment protein 1 (U75) from Homo sapiens (Human).